The primary structure comprises 229 residues: 7-cyano-7-deazaguanine synthase (229 aa).

8-18 (CSGGLDSSVIA) is a binding site for ATP. Cys-190, Cys-203, Cys-206, and Cys-209 together coordinate Zn(2+).

It belongs to the QueC family. Zn(2+) is required as a cofactor.

It catalyses the reaction 7-carboxy-7-deazaguanine + NH4(+) + ATP = 7-cyano-7-deazaguanine + ADP + phosphate + H2O + H(+). It participates in purine metabolism; 7-cyano-7-deazaguanine biosynthesis. Functionally, catalyzes the ATP-dependent conversion of 7-carboxy-7-deazaguanine (CDG) to 7-cyano-7-deazaguanine (preQ(0)). The protein is 7-cyano-7-deazaguanine synthase of Methanopyrus kandleri (strain AV19 / DSM 6324 / JCM 9639 / NBRC 100938).